Here is a 353-residue protein sequence, read N- to C-terminus: MTVILERRESTSLWGRFCNWITSTENRLYIGWFGVLMIPTLLTATSVFIIAFIAAPPVDIDGIREPVSGSLLYGNNIISGAIIPTSAAIGLHFYPIWEAASVDEWLYNGGPYELIVLHFLLGVACYMGREWELSFRLGMRPWIAVAYSAPVAAATAVFLIYPIGQGSFSDGMPLGISGTFNFMIVFQAEHNILMHPFHMLGVAGVFGGSLFSAMHGSLVTSSLIRETTENESANAGYRFGQEEETYNIVAAHGYFGRLIFQYASFNNSRSLHFFLAAWPVVGIWFTALGISTMAFNLNGFNFNQSVVDSQGRVINTWADIINRANLGMEVMHERNAHNFPLDLAAVEAPSING.

N-acetylthreonine is present on Thr2. Residue Thr2 is modified to Phosphothreonine. The next 3 membrane-spanning stretches (helical) occupy residues 29–46 (YIGW…TATS), 118–133 (HFLL…EWEL), and 142–156 (WIAV…AATA). His118 is a chlorophyll a binding site. Pheophytin a is bound at residue Tyr126. The [CaMn4O5] cluster site is built by Asp170 and Glu189. A helical membrane pass occupies residues 197–218 (FHMLGVAGVFGGSLFSAMHGSL). Residue His198 coordinates chlorophyll a. Residues His215 and 264–265 (SF) each bind a quinone. Residue His215 participates in Fe cation binding. Fe cation is bound at residue His272. The chain crosses the membrane as a helical span at residues 274–288 (FLAAWPVVGIWFTAL). [CaMn4O5] cluster contacts are provided by His332, Glu333, Asp342, and Ala344. The propeptide occupies 345-353 (AVEAPSING).

It belongs to the reaction center PufL/M/PsbA/D family. PSII is composed of 1 copy each of membrane proteins PsbA, PsbB, PsbC, PsbD, PsbE, PsbF, PsbH, PsbI, PsbJ, PsbK, PsbL, PsbM, PsbT, PsbX, PsbY, PsbZ, Psb30/Ycf12, at least 3 peripheral proteins of the oxygen-evolving complex and a large number of cofactors. It forms dimeric complexes. The D1/D2 heterodimer binds P680, chlorophylls that are the primary electron donor of PSII, and subsequent electron acceptors. It shares a non-heme iron and each subunit binds pheophytin, quinone, additional chlorophylls, carotenoids and lipids. D1 provides most of the ligands for the Mn4-Ca-O5 cluster of the oxygen-evolving complex (OEC). There is also a Cl(-1) ion associated with D1 and D2, which is required for oxygen evolution. The PSII complex binds additional chlorophylls, carotenoids and specific lipids. is required as a cofactor. In terms of processing, tyr-161 forms a radical intermediate that is referred to as redox-active TyrZ, YZ or Y-Z. Post-translationally, C-terminally processed by CTPA; processing is essential to allow assembly of the oxygen-evolving complex and thus photosynthetic growth.

The protein localises to the plastid. It is found in the chloroplast thylakoid membrane. It catalyses the reaction 2 a plastoquinone + 4 hnu + 2 H2O = 2 a plastoquinol + O2. In terms of biological role, photosystem II (PSII) is a light-driven water:plastoquinone oxidoreductase that uses light energy to abstract electrons from H(2)O, generating O(2) and a proton gradient subsequently used for ATP formation. It consists of a core antenna complex that captures photons, and an electron transfer chain that converts photonic excitation into a charge separation. The D1/D2 (PsbA/PsbD) reaction center heterodimer binds P680, the primary electron donor of PSII as well as several subsequent electron acceptors. This Illicium oligandrum (Star anise) protein is Photosystem II protein D1.